Reading from the N-terminus, the 104-residue chain is UPF0212 protein PH1312 (104 aa).

Belongs to the UPF0212 family.

The chain is UPF0212 protein PH1312 from Pyrococcus horikoshii (strain ATCC 700860 / DSM 12428 / JCM 9974 / NBRC 100139 / OT-3).